Reading from the N-terminus, the 183-residue chain is Ribonuclease M5 (183 aa).

Residues 6–90 form the Toprim domain; it reads KEVIVVEGKD…AYISRVSGTK (85 aa). Residues E12, D59, and D61 each contribute to the Mg(2+) site.

The protein belongs to the ribonuclease M5 family. The cofactor is Mg(2+).

Its subcellular location is the cytoplasm. The catalysed reaction is Endonucleolytic cleavage of RNA, removing 21 and 42 nucleotides, respectively, from the 5'- and 3'-termini of a 5S-rRNA precursor.. Required for correct processing of both the 5' and 3' ends of 5S rRNA precursor. Cleaves both sides of a double-stranded region yielding mature 5S rRNA in one step. This chain is Ribonuclease M5, found in Fusobacterium nucleatum subsp. nucleatum (strain ATCC 25586 / DSM 15643 / BCRC 10681 / CIP 101130 / JCM 8532 / KCTC 2640 / LMG 13131 / VPI 4355).